The following is a 378-amino-acid chain: Mannitol-1-phosphate 5-dehydrogenase (378 aa).

Residue 4-15 coordinates NAD(+); it reads SVHFGAGNIGRG.

Belongs to the mannitol dehydrogenase family.

It carries out the reaction D-mannitol 1-phosphate + NAD(+) = beta-D-fructose 6-phosphate + NADH + H(+). This Streptococcus pneumoniae (strain ATCC BAA-255 / R6) protein is Mannitol-1-phosphate 5-dehydrogenase.